Reading from the N-terminus, the 23-residue chain is Endochitinase B (23 aa).

Belongs to the glycosyl hydrolase 19 family. Chitinase class I subfamily.

It catalyses the reaction Random endo-hydrolysis of N-acetyl-beta-D-glucosaminide (1-&gt;4)-beta-linkages in chitin and chitodextrins.. In terms of biological role, defense against chitin-containing fungal pathogens. The sequence is that of Endochitinase B from Pisum sativum (Garden pea).